The chain runs to 588 residues: Dual specificity tyrosine-phosphorylation-regulated kinase 3 (588 aa).

The disordered stretch occupies residues methionine 1–glycine 188. Polar residues predominate over residues serine 97–lysine 134. Positions tyrosine 209–isoleucine 522 constitute a Protein kinase domain. ATP is bound by residues isoleucine 215–valine 223, lysine 238, and phenylalanine 288–leucine 291. Aspartate 335 (proton acceptor) is an active-site residue. Serine 350 carries the post-translational modification Phosphoserine. A Phosphotyrosine modification is found at tyrosine 369. The short motif at arginine 468–lysine 481 is the Nuclear localization signal element.

The protein belongs to the protein kinase superfamily. CMGC Ser/Thr protein kinase family. MNB/DYRK subfamily. Interacts with SIRT1. Mg(2+) serves as cofactor. Ubiquitinated at anaphase by the anaphase-promoting complex (APC/C), leading to its degradation by the proteasome. In terms of processing, protein kinase activity is activated following autophosphorylation at Tyr-369. Autophosphorylation at Ser-350 stabilizes the protein and enhances the protein kinase activity. In terms of tissue distribution, isoform 1: Highly expressed in testis and in hematopoietic tissue such as fetal liver, and bone marrow. Isoform 1: Predominant form in fetal liver and bone marrow. Isoform 1: Present at low levels in heart, pancreas, lymph node and thymus. Isoform 2: Highly expressed in testis and in hematopoietic tissue such as fetal liver, and bone marrow. Isoform 2: Predominant form in testis. Isoform 2: Present at low levels in heart, pancreas, lymph node and thymus.

It localises to the nucleus. Its subcellular location is the cytoplasm. The protein localises to the nucleus speckle. The protein resides in the cytoplasmic granule. It is found in the cytoskeleton. It localises to the microtubule organizing center. Its subcellular location is the centrosome. The catalysed reaction is L-seryl-[protein] + ATP = O-phospho-L-seryl-[protein] + ADP + H(+). It catalyses the reaction L-threonyl-[protein] + ATP = O-phospho-L-threonyl-[protein] + ADP + H(+). It carries out the reaction L-tyrosyl-[protein] + ATP = O-phospho-L-tyrosyl-[protein] + ADP + H(+). Protein kinase activity is activated following autophosphorylation at Tyr-369. Inhibited by harmine, an ATP competitive inhibitor. Inhibited by small-compound GSK-626616. Dual-specificity protein kinase that promotes disassembly of several types of membraneless organelles during mitosis, such as stress granules, nuclear speckles and pericentriolar material. Dual-specificity tyrosine-regulated kinases (DYRKs) autophosphorylate a critical tyrosine residue in their activation loop and phosphorylate their substrate on serine and threonine residues. Acts as a central dissolvase of membraneless organelles during the G2-to-M transition, after the nuclear-envelope breakdown: acts by mediating phosphorylation of multiple serine and threonine residues in unstructured domains of proteins, such as SRRM1 and PCM1. Does not mediate disassembly of all membraneless organelles: disassembly of P-body and nucleolus is not regulated by DYRK3. Dissolution of membraneless organelles at the onset of mitosis is also required to release mitotic regulators, such as ZNF207, from liquid-unmixed organelles where they are sequestered and keep them dissolved during mitosis. Regulates mTORC1 by mediating the dissolution of stress granules: during stressful conditions, DYRK3 partitions from the cytosol to the stress granule, together with mTORC1 components, which prevents mTORC1 signaling. When stress signals are gone, the kinase activity of DYRK3 is required for the dissolution of stress granule and mTORC1 relocation to the cytosol: acts by mediating the phosphorylation of the mTORC1 inhibitor AKT1S1, allowing full reactivation of mTORC1 signaling. Also acts as a negative regulator of EPO-dependent erythropoiesis: may place an upper limit on red cell production during stress erythropoiesis. Inhibits cell death due to cytokine withdrawal in hematopoietic progenitor cells. Promotes cell survival upon genotoxic stress through phosphorylation of SIRT1: this in turn inhibits p53/TP53 activity and apoptosis. The protein is Dual specificity tyrosine-phosphorylation-regulated kinase 3 of Homo sapiens (Human).